A 98-amino-acid chain; its full sequence is uncharacterized protein (98 aa).

This is an uncharacterized protein from Rickettsia conorii (strain ATCC VR-613 / Malish 7).